Reading from the N-terminus, the 40-residue chain is Dolichyl-diphosphooligosaccharide--protein glycosyltransferase subunit 4 (40 aa).

At 1 to 4 the chain is on the lumenal side; sequence MITD. Residues 5 to 25 traverse the membrane as a helical segment; it reads VQLAIFSNVLGVFLFLLVVAY. The Cytoplasmic portion of the chain corresponds to 26–40; that stretch reads HYINANTGKSSIKNK.

Belongs to the OST4 family. Component of the oligosaccharyltransferase (OST) complex.

The protein localises to the endoplasmic reticulum membrane. Subunit of the oligosaccharyl transferase (OST) complex that catalyzes the initial transfer of a defined glycan (Glc(3)Man(9)GlcNAc(2) in eukaryotes) from the lipid carrier dolichol-pyrophosphate to an asparagine residue within an Asn-X-Ser/Thr consensus motif in nascent polypeptide chains, the first step in protein N-glycosylation. N-glycosylation occurs cotranslationally and the complex associates with the Sec61 complex at the channel-forming translocon complex that mediates protein translocation across the endoplasmic reticulum (ER). All subunits are required for a maximal enzyme activity. The polypeptide is Dolichyl-diphosphooligosaccharide--protein glycosyltransferase subunit 4 (Drosophila mojavensis (Fruit fly)).